We begin with the raw amino-acid sequence, 337 residues long: Holliday junction branch migration complex subunit RuvB (337 aa).

Residues 4–186 (ADRLIAADNP…FGIVQRLEYY (183 aa)) form a large ATPase domain (RuvB-L) region. Residues isoleucine 25, arginine 26, glycine 67, lysine 70, threonine 71, threonine 72, 133 to 135 (EDY), arginine 176, tyrosine 186, and arginine 223 each bind ATP. Threonine 71 contacts Mg(2+). A small ATPAse domain (RuvB-S) region spans residues 187–257 (KVDDLQYIVQ…IADKALNMLD (71 aa)). A head domain (RuvB-H) region spans residues 260–337 (VCGFDYMDRK…LHFGIDRPDK (78 aa)). 2 residues coordinate DNA: arginine 315 and arginine 320.

This sequence belongs to the RuvB family. As to quaternary structure, homohexamer. Forms an RuvA(8)-RuvB(12)-Holliday junction (HJ) complex. HJ DNA is sandwiched between 2 RuvA tetramers; dsDNA enters through RuvA and exits via RuvB. An RuvB hexamer assembles on each DNA strand where it exits the tetramer. Each RuvB hexamer is contacted by two RuvA subunits (via domain III) on 2 adjacent RuvB subunits; this complex drives branch migration. In the full resolvosome a probable DNA-RuvA(4)-RuvB(12)-RuvC(2) complex forms which resolves the HJ.

Its subcellular location is the cytoplasm. The catalysed reaction is ATP + H2O = ADP + phosphate + H(+). In terms of biological role, the RuvA-RuvB-RuvC complex processes Holliday junction (HJ) DNA during genetic recombination and DNA repair, while the RuvA-RuvB complex plays an important role in the rescue of blocked DNA replication forks via replication fork reversal (RFR). RuvA specifically binds to HJ cruciform DNA, conferring on it an open structure. The RuvB hexamer acts as an ATP-dependent pump, pulling dsDNA into and through the RuvAB complex. RuvB forms 2 homohexamers on either side of HJ DNA bound by 1 or 2 RuvA tetramers; 4 subunits per hexamer contact DNA at a time. Coordinated motions by a converter formed by DNA-disengaged RuvB subunits stimulates ATP hydrolysis and nucleotide exchange. Immobilization of the converter enables RuvB to convert the ATP-contained energy into a lever motion, pulling 2 nucleotides of DNA out of the RuvA tetramer per ATP hydrolyzed, thus driving DNA branch migration. The RuvB motors rotate together with the DNA substrate, which together with the progressing nucleotide cycle form the mechanistic basis for DNA recombination by continuous HJ branch migration. Branch migration allows RuvC to scan DNA until it finds its consensus sequence, where it cleaves and resolves cruciform DNA. This chain is Holliday junction branch migration complex subunit RuvB, found in Aliivibrio salmonicida (strain LFI1238) (Vibrio salmonicida (strain LFI1238)).